Here is a 403-residue protein sequence, read N- to C-terminus: S-adenosylmethionine synthase (403 aa).

Residue His-15 coordinates ATP. Asp-17 provides a ligand contact to Mg(2+). Glu-43 is a binding site for K(+). L-methionine contacts are provided by Glu-56 and Gln-99. The segment at 99–109 (QSPDINQGVDR) is flexible loop. ATP contacts are provided by residues 166–168 (DAK), 232–233 (KF), Asp-241, 247–248 (RK), Ala-264, and Lys-268. Position 241 (Asp-241) interacts with L-methionine. Lys-272 provides a ligand contact to L-methionine.

It belongs to the AdoMet synthase family. Homotetramer; dimer of dimers. Requires Mg(2+) as cofactor. K(+) is required as a cofactor.

The protein localises to the cytoplasm. The enzyme catalyses L-methionine + ATP + H2O = S-adenosyl-L-methionine + phosphate + diphosphate. The protein operates within amino-acid biosynthesis; S-adenosyl-L-methionine biosynthesis; S-adenosyl-L-methionine from L-methionine: step 1/1. Functionally, catalyzes the formation of S-adenosylmethionine (AdoMet) from methionine and ATP. The overall synthetic reaction is composed of two sequential steps, AdoMet formation and the subsequent tripolyphosphate hydrolysis which occurs prior to release of AdoMet from the enzyme. The sequence is that of S-adenosylmethionine synthase from Xylella fastidiosa (strain M12).